Consider the following 137-residue polypeptide: Oleosin Ara h 11.0102 (137 aa).

A2 carries the post-translational modification N-acetylalanine; alternate. Transmembrane regions (helical) follow at residues 27 to 47 (AVVAGGSLLILAGLVLAATVI) and 55 to 75 (LFVIFSPVLVPAVITVALLGL).

This sequence belongs to the oleosin family. As to expression, expressed in seeds (at protein level).

The protein localises to the lipid droplet. Its subcellular location is the membrane. Functionally, may have a structural role to stabilize the lipid body during desiccation of the seed by preventing coalescence of the oil. Probably interacts with both lipid and phospholipid moieties of lipid bodies. May also provide recognition signals for specific lipase anchorage in lipolysis during seedling growth. This chain is Oleosin Ara h 11.0102, found in Arachis hypogaea (Peanut).